The chain runs to 178 residues: Sec-independent protein translocase protein TatB (178 aa).

The chain crosses the membrane as a helical span at residues 2–22 (LPEIGAAELLIIAAVALIVVG). The interval 104–178 (HSPTGYENTV…KARKTAGSAE (75 aa)) is disordered. Over residues 114–131 (EPPPPEPEPQPAAEPAPK) the composition is skewed to pro residues. The segment covering 141–154 (PKAAAAPKAAAKPK) has biased composition (low complexity).

Belongs to the TatB family. In terms of assembly, the Tat system comprises two distinct complexes: a TatABC complex, containing multiple copies of TatA, TatB and TatC subunits, and a separate TatA complex, containing only TatA subunits. Substrates initially bind to the TatABC complex, which probably triggers association of the separate TatA complex to form the active translocon.

Its subcellular location is the cell inner membrane. Functionally, part of the twin-arginine translocation (Tat) system that transports large folded proteins containing a characteristic twin-arginine motif in their signal peptide across membranes. Together with TatC, TatB is part of a receptor directly interacting with Tat signal peptides. TatB may form an oligomeric binding site that transiently accommodates folded Tat precursor proteins before their translocation. This is Sec-independent protein translocase protein TatB from Phenylobacterium zucineum (strain HLK1).